The following is a 297-amino-acid chain: Guanylate kinase (297 aa).

The region spanning 4–183 (GKMIIISGPS…AVAKITDVLH (180 aa)) is the Guanylate kinase-like domain. Residue 11-18 (GPSGVGKG) coordinates ATP. The tract at residues 204-297 (EQIVKEKYMY…EQKHYNNDEF (94 aa)) is unknown.

This sequence belongs to the guanylate kinase family.

It is found in the cytoplasm. It catalyses the reaction GMP + ATP = GDP + ADP. Its function is as follows. Essential for recycling GMP and indirectly, cGMP. This chain is Guanylate kinase (gmk), found in Mycoplasma mycoides subsp. mycoides SC (strain CCUG 32753 / NCTC 10114 / PG1).